Reading from the N-terminus, the 444-residue chain is Trigger factor (444 aa).

Residues 165-250 enclose the PPIase FKBP-type domain; it reads GDFAKFDFEG…LHEIQELKIP (86 aa).

This sequence belongs to the FKBP-type PPIase family. Tig subfamily.

Its subcellular location is the cytoplasm. The catalysed reaction is [protein]-peptidylproline (omega=180) = [protein]-peptidylproline (omega=0). Involved in protein export. Acts as a chaperone by maintaining the newly synthesized protein in an open conformation. Functions as a peptidyl-prolyl cis-trans isomerase. The sequence is that of Trigger factor from Campylobacter jejuni subsp. jejuni serotype O:23/36 (strain 81-176).